The following is a 265-amino-acid chain: Apolipoprotein A-I (265 aa).

An N-terminal signal peptide occupies residues 1–18 (MKAVLLTLAVLFLTGSQA). Repeat copies occupy residues 67-88 (LKLL…EQLG) and 89-110 (PVTQ…QEMN). A 10 X approximate tandem repeats region spans residues 67-265 (LKLLDNWDSL…DEASKKLNAQ (199 aa)). Met109 carries the post-translational modification Methionine sulfoxide. The 3; half-length repeat unit spans residues 111-121 (KDLEEVKQKVQ). Repeat copies occupy residues 122–142 (PYLD…RQKV), 144–165 (PLGE…DKLT), 166–187 (PLAE…QQLA), 188–209 (PYSD…AGGG), and 210–230 (SLAE…EKAK). The stretch at 231–241 (PALEDLRQGLV) is one 9; half-length repeat. The stretch at 242-265 (PVLESLKVSILAAIDEASKKLNAQ) is repeat 10.

Belongs to the apolipoprotein A1/A4/E family. In terms of assembly, homodimer. Interacts with APOA1BP and CLU. Component of a sperm activating protein complex (SPAP), consisting of APOA1, an immunoglobulin heavy chain, an immunoglobulin light chain and albumin. Interacts with NDRG1. Interacts with SCGB3A2. Interacts with NAXE and YJEFN3. Post-translationally, glycosylated. In terms of processing, palmitoylated. Phosphorylation sites are present in the extracellular medium. As to expression, major protein of plasma HDL, also found in chylomicrons.

The protein localises to the secreted. In terms of biological role, participates in the reverse transport of cholesterol from tissues to the liver for excretion by promoting cholesterol efflux from tissues and by acting as a cofactor for the lecithin cholesterol acyltransferase (LCAT). As part of the SPAP complex, activates spermatozoa motility. The sequence is that of Apolipoprotein A-I (APOA1) from Tursiops truncatus (Atlantic bottle-nosed dolphin).